We begin with the raw amino-acid sequence, 341 residues long: Glucokinase (341 aa).

18-23 (GDIGGT) is a binding site for ATP.

Belongs to the bacterial glucokinase family.

The protein resides in the cytoplasm. It catalyses the reaction D-glucose + ATP = D-glucose 6-phosphate + ADP + H(+). This chain is Glucokinase, found in Rhizobium etli (strain CIAT 652).